The following is a 429-amino-acid chain: UDP-N-acetylglucosamine 1-carboxyvinyltransferase (429 aa).

A phosphoenolpyruvate-binding site is contributed by 22–23 (KN). Residue R102 participates in UDP-N-acetyl-alpha-D-glucosamine binding. C126 (proton donor) is an active-site residue. Position 126 is a 2-(S-cysteinyl)pyruvic acid O-phosphothioketal (C126). Residues 131-135 (RPVDL), D316, and I338 each bind UDP-N-acetyl-alpha-D-glucosamine.

It belongs to the EPSP synthase family. MurA subfamily.

It localises to the cytoplasm. It catalyses the reaction phosphoenolpyruvate + UDP-N-acetyl-alpha-D-glucosamine = UDP-N-acetyl-3-O-(1-carboxyvinyl)-alpha-D-glucosamine + phosphate. The protein operates within cell wall biogenesis; peptidoglycan biosynthesis. Cell wall formation. Adds enolpyruvyl to UDP-N-acetylglucosamine. This is UDP-N-acetylglucosamine 1-carboxyvinyltransferase from Afipia carboxidovorans (strain ATCC 49405 / DSM 1227 / KCTC 32145 / OM5) (Oligotropha carboxidovorans).